Here is a 417-residue protein sequence, read N- to C-terminus: Serine hydroxymethyltransferase (417 aa).

(6S)-5,6,7,8-tetrahydrofolate is bound by residues Leu-121 and 125 to 127 (GHL). Position 229 is an N6-(pyridoxal phosphate)lysine (Lys-229). 355 to 357 (SPF) is a binding site for (6S)-5,6,7,8-tetrahydrofolate.

This sequence belongs to the SHMT family. As to quaternary structure, homodimer. Requires pyridoxal 5'-phosphate as cofactor.

The protein localises to the cytoplasm. It carries out the reaction (6R)-5,10-methylene-5,6,7,8-tetrahydrofolate + glycine + H2O = (6S)-5,6,7,8-tetrahydrofolate + L-serine. It functions in the pathway one-carbon metabolism; tetrahydrofolate interconversion. The protein operates within amino-acid biosynthesis; glycine biosynthesis; glycine from L-serine: step 1/1. Its function is as follows. Catalyzes the reversible interconversion of serine and glycine with tetrahydrofolate (THF) serving as the one-carbon carrier. This reaction serves as the major source of one-carbon groups required for the biosynthesis of purines, thymidylate, methionine, and other important biomolecules. Also exhibits THF-independent aldolase activity toward beta-hydroxyamino acids, producing glycine and aldehydes, via a retro-aldol mechanism. The sequence is that of Serine hydroxymethyltransferase from Salmonella choleraesuis (strain SC-B67).